The sequence spans 255 residues: Indole-3-glycerol phosphate synthase (255 aa).

The protein belongs to the TrpC family.

It carries out the reaction 1-(2-carboxyphenylamino)-1-deoxy-D-ribulose 5-phosphate + H(+) = (1S,2R)-1-C-(indol-3-yl)glycerol 3-phosphate + CO2 + H2O. It functions in the pathway amino-acid biosynthesis; L-tryptophan biosynthesis; L-tryptophan from chorismate: step 4/5. This is Indole-3-glycerol phosphate synthase from Streptococcus pneumoniae serotype 19F (strain G54).